The following is a 189-amino-acid chain: Large ribosomal subunit protein uL6 (189 aa).

The protein belongs to the universal ribosomal protein uL6 family. Part of the 50S ribosomal subunit.

In terms of biological role, this protein binds to the 23S rRNA, and is important in its secondary structure. It is located near the subunit interface in the base of the L7/L12 stalk, and near the tRNA binding site of the peptidyltransferase center. The polypeptide is Large ribosomal subunit protein uL6 (Phocaeicola vulgatus (strain ATCC 8482 / DSM 1447 / JCM 5826 / CCUG 4940 / NBRC 14291 / NCTC 11154) (Bacteroides vulgatus)).